Reading from the N-terminus, the 326-residue chain is Probable iron chelatin transport system permease protein jhp_0822 (326 aa).

10 helical membrane passes run 7–27 (IALA…ESLS), 64–84 (ILAL…QTIL), 91–111 (PFLL…IAVV), 113–133 (SNIA…VLAM), 142–162 (LSLV…AGAI), 164–184 (FFVI…SLSL), 187–207 (YKDC…LFLL), 241–261 (VASA…LVIP), 275–295 (LLLS…VVAK), and 301–321 (DLPV…WLLF).

This sequence belongs to the binding-protein-dependent transport system permease family. FecCD subfamily.

The protein resides in the cell inner membrane. Functionally, part of a binding-protein-dependent transport system for an iron chelatin; probably responsible for the translocation of the substrate across the membrane. The protein is Probable iron chelatin transport system permease protein jhp_0822 of Helicobacter pylori (strain J99 / ATCC 700824) (Campylobacter pylori J99).